The following is a 237-amino-acid chain: Class B acid phosphatase (237 aa).

An N-terminal signal peptide occupies residues 1 to 25 (MRKVSLALSAACLLFTLNYTASALA). Catalysis depends on Asp69, which acts as the Nucleophile. Residues Asp69 and Asp71 each coordinate Mg(2+). The active-site Proton donor is the Asp71. Substrate contacts are provided by residues 137 to 138 (TG) and Lys177. Asp192 is a Mg(2+) binding site.

This sequence belongs to the class B bacterial acid phosphatase family. Homotetramer. Mg(2+) is required as a cofactor.

The protein localises to the periplasm. The enzyme catalyses a phosphate monoester + H2O = an alcohol + phosphate. Functionally, dephosphorylates several organic phosphate monoesters. Also has a phosphotransferase activity catalyzing the transfer of low-energy phosphate groups from organic phosphate monoesters to free hydroxyl groups of various organic compounds. The protein is Class B acid phosphatase of Citrobacter rodentium (strain ICC168) (Citrobacter freundii biotype 4280).